Here is a 34-residue protein sequence, read N- to C-terminus: Photosystem II reaction center protein M (34 aa).

A helical membrane pass occupies residues 5–25; sequence ILAFIATALFILVPTAFLLII.

It belongs to the PsbM family. PSII is composed of 1 copy each of membrane proteins PsbA, PsbB, PsbC, PsbD, PsbE, PsbF, PsbH, PsbI, PsbJ, PsbK, PsbL, PsbM, PsbT, PsbX, PsbY, PsbZ, Psb30/Ycf12, at least 3 peripheral proteins of the oxygen-evolving complex and a large number of cofactors. It forms dimeric complexes.

Its subcellular location is the plastid. The protein resides in the chloroplast thylakoid membrane. Its function is as follows. One of the components of the core complex of photosystem II (PSII). PSII is a light-driven water:plastoquinone oxidoreductase that uses light energy to abstract electrons from H(2)O, generating O(2) and a proton gradient subsequently used for ATP formation. It consists of a core antenna complex that captures photons, and an electron transfer chain that converts photonic excitation into a charge separation. This subunit is found at the monomer-monomer interface. This Cenchrus americanus (Pearl millet) protein is Photosystem II reaction center protein M.